Consider the following 873-residue polypeptide: Leucine--tRNA ligase (873 aa).

Residues 43–53 carry the 'HIGH' region motif; the sequence is PYPSGSLHMGH. The short motif at 624-628 is the 'KMSKS' region element; sequence TMSKS. ATP is bound at residue Lys627.

The protein belongs to the class-I aminoacyl-tRNA synthetase family.

It localises to the cytoplasm. The catalysed reaction is tRNA(Leu) + L-leucine + ATP = L-leucyl-tRNA(Leu) + AMP + diphosphate. This Synechococcus sp. (strain JA-3-3Ab) (Cyanobacteria bacterium Yellowstone A-Prime) protein is Leucine--tRNA ligase.